The following is a 204-amino-acid chain: Outer-membrane lipoprotein carrier protein (204 aa).

Residues 1–21 form the signal peptide; it reads MKKLLVACCVVSGMMSASVLA.

Belongs to the LolA family. As to quaternary structure, monomer.

Its subcellular location is the periplasm. Its function is as follows. Participates in the translocation of lipoproteins from the inner membrane to the outer membrane. Only forms a complex with a lipoprotein if the residue after the N-terminal Cys is not an aspartate (The Asp acts as a targeting signal to indicate that the lipoprotein should stay in the inner membrane). This Edwardsiella ictaluri (strain 93-146) protein is Outer-membrane lipoprotein carrier protein.